The primary structure comprises 177 residues: Cytochrome c-type biogenesis protein CcmE (177 aa).

Residues 1–8 (MNPRRKSR) are Cytoplasmic-facing. A helical; Signal-anchor for type II membrane protein transmembrane segment spans residues 9 to 29 (LKVVMAVLSGLAVAVGLTLYA). Residues 30 to 177 (LSQNIDLFYT…QISQPFGENK (148 aa)) lie on the Periplasmic side of the membrane. Positions 131 and 135 each coordinate heme. Positions 134 to 177 (NYMPPELGDQMKKQHQPMGISEADLKGKSERDATQISQPFGENK) are disordered. The segment covering 156 to 166 (ADLKGKSERDA) has biased composition (basic and acidic residues). Residues 167 to 177 (TQISQPFGENK) are compositionally biased toward polar residues.

It belongs to the CcmE/CycJ family.

It is found in the cell inner membrane. Its function is as follows. Heme chaperone required for the biogenesis of c-type cytochromes. Transiently binds heme delivered by CcmC and transfers the heme to apo-cytochromes in a process facilitated by CcmF and CcmH. This is Cytochrome c-type biogenesis protein CcmE from Glaesserella parasuis serovar 5 (strain SH0165) (Haemophilus parasuis).